Consider the following 485-residue polypeptide: UDP-glycosyltransferase 91D1 (485 aa).

Residues Ser-296, 355-356 (WA), 373-381 (HCGSGSIVE), and 395-398 (FCDQ) contribute to the UDP-alpha-D-glucose site.

This sequence belongs to the UDP-glycosyltransferase family.

In terms of biological role, may glycosylate diterpenes or flavonols in leaves. The chain is UDP-glycosyltransferase 91D1 from Stevia rebaudiana (Stevia).